Reading from the N-terminus, the 23-residue chain is Alpha-conotoxin-like RgIB (23 aa).

2 cysteine pairs are disulfide-bonded: C5-C11 and C6-C19. A lacks the Ser-Xaa-Pro motif that is crucial for potent interaction with nAChR region spans residues 7–9 (KNP).

As to expression, expressed by venom duct.

It localises to the secreted. Its function is as follows. Alpha-conotoxins act on postsynaptic membranes, they bind to the nicotinic acetylcholine receptors (nAChR) and thus inhibit them. Is a specific blocker of the alpha-3-beta-4/CHRNA3-CHRNB4 image nAChR and may also block alpha-3-beta-4-alpha-5 (CHRNA3-CHRNB4-CHRNA5) channels. Has possibly a distinct nAChR binding mode from other alpha-conotoxins, due to a different three residue motif (lacks the Ser-Xaa-Pro motif). In vivo, causes hyperactivity and behavioral disorders in mice following intracranial injection. The protein is Alpha-conotoxin-like RgIB of Conus regius (Crown cone).